An 872-amino-acid polypeptide reads, in one-letter code: Alanine--tRNA ligase (872 aa).

Zn(2+) contacts are provided by His-567, His-571, Cys-669, and His-673.

It belongs to the class-II aminoacyl-tRNA synthetase family. The cofactor is Zn(2+).

Its subcellular location is the cytoplasm. It catalyses the reaction tRNA(Ala) + L-alanine + ATP = L-alanyl-tRNA(Ala) + AMP + diphosphate. In terms of biological role, catalyzes the attachment of alanine to tRNA(Ala) in a two-step reaction: alanine is first activated by ATP to form Ala-AMP and then transferred to the acceptor end of tRNA(Ala). Also edits incorrectly charged Ser-tRNA(Ala) and Gly-tRNA(Ala) via its editing domain. The chain is Alanine--tRNA ligase from Streptococcus pneumoniae (strain CGSP14).